The following is a 78-amino-acid chain: D-alanyl carrier protein (78 aa).

A Carrier domain is found at 1-78 (MEFKEQVLDL…KIVEALEELR (78 aa)). O-(pantetheine 4'-phosphoryl)serine is present on Ser36.

It belongs to the DltC family. 4'-phosphopantetheine is transferred from CoA to a specific serine of apo-DCP.

The protein localises to the cytoplasm. Its pathway is cell wall biogenesis; lipoteichoic acid biosynthesis. Carrier protein involved in the D-alanylation of lipoteichoic acid (LTA). The loading of thioester-linked D-alanine onto DltC is catalyzed by D-alanine--D-alanyl carrier protein ligase DltA. The DltC-carried D-alanyl group is further transferred to cell membrane phosphatidylglycerol (PG) by forming an ester bond, probably catalyzed by DltD. D-alanylation of LTA plays an important role in modulating the properties of the cell wall in Gram-positive bacteria, influencing the net charge of the cell wall. This chain is D-alanyl carrier protein, found in Staphylococcus haemolyticus (strain JCSC1435).